Consider the following 443-residue polypeptide: tRNA modification GTPase MnmE (443 aa).

(6S)-5-formyl-5,6,7,8-tetrahydrofolate is bound by residues Arg-23, Glu-82, and Lys-121. A TrmE-type G domain is found at 215 to 364 (GTSIVLAGHP…LKQFIQKWIQ (150 aa)). Asn-225 is a K(+) binding site. GTP-binding positions include 225-230 (NAGKSS), 244-250 (TDIPGTT), and 269-272 (DSAG). Residue Ser-229 participates in Mg(2+) binding. K(+)-binding residues include Thr-244, Ile-246, and Thr-249. Mg(2+) is bound at residue Thr-250. Lys-443 contacts (6S)-5-formyl-5,6,7,8-tetrahydrofolate.

This sequence belongs to the TRAFAC class TrmE-Era-EngA-EngB-Septin-like GTPase superfamily. TrmE GTPase family. As to quaternary structure, homodimer. Heterotetramer of two MnmE and two MnmG subunits. Requires K(+) as cofactor.

It localises to the cytoplasm. Exhibits a very high intrinsic GTPase hydrolysis rate. Involved in the addition of a carboxymethylaminomethyl (cmnm) group at the wobble position (U34) of certain tRNAs, forming tRNA-cmnm(5)s(2)U34. This Chlamydia felis (strain Fe/C-56) (Chlamydophila felis) protein is tRNA modification GTPase MnmE.